The following is a 203-amino-acid chain: Chaperonin-like RbcX protein 2, chloroplastic (203 aa).

The N-terminal 78 residues, 1 to 78 (MVSAWFVVGS…RKSKKLLIVN (78 aa)), are a transit peptide targeting the chloroplast.

It belongs to the RbcX family. In terms of assembly, homodimer. Interacts with rbcL, atpB and RBCS-1B.

It is found in the plastid. The protein resides in the chloroplast stroma. In terms of biological role, chaperone involved in RuBisCO assembly process. This is Chaperonin-like RbcX protein 2, chloroplastic from Arabidopsis thaliana (Mouse-ear cress).